Reading from the N-terminus, the 164-residue chain is Phosphopantetheine adenylyltransferase (164 aa).

Position 14 (Thr-14) interacts with substrate. ATP-binding positions include 14–15 (TF) and His-22. Substrate-binding residues include Lys-46, Leu-78, and Arg-92. ATP contacts are provided by residues 93 to 95 (GLR), Glu-103, and 128 to 134 (HAFISST).

Belongs to the bacterial CoaD family. As to quaternary structure, homohexamer. It depends on Mg(2+) as a cofactor.

It localises to the cytoplasm. The catalysed reaction is (R)-4'-phosphopantetheine + ATP + H(+) = 3'-dephospho-CoA + diphosphate. It participates in cofactor biosynthesis; coenzyme A biosynthesis; CoA from (R)-pantothenate: step 4/5. In terms of biological role, reversibly transfers an adenylyl group from ATP to 4'-phosphopantetheine, yielding dephospho-CoA (dPCoA) and pyrophosphate. In Vibrio cholerae serotype O1 (strain ATCC 39541 / Classical Ogawa 395 / O395), this protein is Phosphopantetheine adenylyltransferase.